A 429-amino-acid chain; its full sequence is MFKRIALVCALFSGICFAEGKQLLDKVVAIVNDNVITSSELNAQVELSKKQIIAQNMQMPDESVLRKQVLQHLIDVDLEMQMAKQNGITIENAEIDEAIEKIAASNHLNLSQMRDEITKQGISWQEYRQNIRKEMLISRVQQKAVGKDIIVTNEQVEQYLKNAGRIENSNLTYHLKNIVIPLSEEPTTKQLQRAKIEAENLLNKIKKGEDFSRLAIEESSGEFALEGGDLGERHLAELPEVFAKEVVHMKVGQVAGPIRAGNGFHLIKLVAVGGENQRHVITQTHVRHILLKPDASMVPSEAIKQVNNIYRQIQSGKDFALMAKQYSLDAASAVKGGDLGWVNPGELVPEFEKTMNSLPLHKVSKPVKTQYGWHLIEVIARRQKDDSEAFKKQQVRQFLQQRKFVEAVQNWQQHLRSQAYINIVDKDLA.

Residues 1-18 form the signal peptide; the sequence is MFKRIALVCALFSGICFA. 2 PpiC domains span residues 170-271 and 281-380; these read NLTY…KLVA and ITQT…EVIA.

It localises to the periplasm. It carries out the reaction [protein]-peptidylproline (omega=180) = [protein]-peptidylproline (omega=0). Its function is as follows. Chaperone involved in the correct folding and assembly of outer membrane proteins. Recognizes specific patterns of aromatic residues and the orientation of their side chains, which are found more frequently in integral outer membrane proteins. May act in both early periplasmic and late outer membrane-associated steps of protein maturation. This Legionella pneumophila (strain Paris) protein is Chaperone SurA.